The chain runs to 94 residues: CRISPR-associated endoribonuclease Cas2 (94 aa).

Residue Asp-10 coordinates Mg(2+).

Belongs to the CRISPR-associated endoribonuclease Cas2 protein family. Homodimer, forms a heterotetramer with a Cas1 homodimer. It depends on Mg(2+) as a cofactor.

In terms of biological role, CRISPR (clustered regularly interspaced short palindromic repeat), is an adaptive immune system that provides protection against mobile genetic elements (viruses, transposable elements and conjugative plasmids). CRISPR clusters contain sequences complementary to antecedent mobile elements and target invading nucleic acids. CRISPR clusters are transcribed and processed into CRISPR RNA (crRNA). Functions as a ssRNA-specific endoribonuclease. Involved in the integration of spacer DNA into the CRISPR cassette. This is CRISPR-associated endoribonuclease Cas2 from Leptospira interrogans serogroup Icterohaemorrhagiae serovar Lai (strain 56601).